Reading from the N-terminus, the 80-residue chain is Small ribosomal subunit protein uS17 (80 aa).

Belongs to the universal ribosomal protein uS17 family. As to quaternary structure, part of the 30S ribosomal subunit.

Functionally, one of the primary rRNA binding proteins, it binds specifically to the 5'-end of 16S ribosomal RNA. In Brucella abortus (strain S19), this protein is Small ribosomal subunit protein uS17.